Reading from the N-terminus, the 434-residue chain is Histidine--tRNA ligase (434 aa).

The tract at residues 412–434 is disordered; that stretch reads DQTTVPVEAFPGDHDAPTYEDVV.

It belongs to the class-II aminoacyl-tRNA synthetase family.

The protein localises to the cytoplasm. The enzyme catalyses tRNA(His) + L-histidine + ATP = L-histidyl-tRNA(His) + AMP + diphosphate + H(+). This chain is Histidine--tRNA ligase, found in Haloquadratum walsbyi (strain DSM 16790 / HBSQ001).